The sequence spans 384 residues: 8-amino-7-oxononanoate synthase (384 aa).

Arginine 21 serves as a coordination point for substrate. 108-109 (GF) serves as a coordination point for pyridoxal 5'-phosphate. Substrate is bound at residue histidine 133. Positions 179, 207, and 233 each coordinate pyridoxal 5'-phosphate. Lysine 236 carries the post-translational modification N6-(pyridoxal phosphate)lysine. Threonine 352 lines the substrate pocket.

The protein belongs to the class-II pyridoxal-phosphate-dependent aminotransferase family. BioF subfamily. In terms of assembly, homodimer. It depends on pyridoxal 5'-phosphate as a cofactor.

The enzyme catalyses 6-carboxyhexanoyl-[ACP] + L-alanine + H(+) = (8S)-8-amino-7-oxononanoate + holo-[ACP] + CO2. It participates in cofactor biosynthesis; biotin biosynthesis. Catalyzes the decarboxylative condensation of pimeloyl-[acyl-carrier protein] and L-alanine to produce 8-amino-7-oxononanoate (AON), [acyl-carrier protein], and carbon dioxide. This is 8-amino-7-oxononanoate synthase from Escherichia coli O157:H7.